The primary structure comprises 64 residues: Putative calcium channel toxin Tx758 (64 aa).

Residues 1 to 18 (MSTFVIVFLLLTAVLCHA) form the signal peptide. The propeptide occupies 19–27 (EPALDETAR). Cystine bridges form between C29-C43, C36-C49, and C42-C58.

The protein belongs to the scorpion calcin-like family. Expressed by the venom gland.

Its subcellular location is the secreted. In terms of biological role, may increase intracellular calcium release through the activation of nuclear inositol 1,4,5-trisphosphate receptors (ITPR) of cardiomyocytes, thereby causing an increase in the contraction frequency of these cells. The chain is Putative calcium channel toxin Tx758 from Buthus israelis (Israeli scorpion).